Here is a 668-residue protein sequence, read N- to C-terminus: Spartin (668 aa).

The residue at position 1 (M1) is an N-acetylmethionine. Residues 16–94 (IKEAYKKAFV…LQNVRTRLEI (79 aa)) form the MIT domain. A disordered region spans residues 110 to 176 (VPKLYPEFPP…PSEAPPAYTP (67 aa)). The segment covering 118-127 (PPKDMSEKSP) has biased composition (basic and acidic residues). Position 126 is a phosphoserine (S126). Positions 128–162 (EPQSLSSLPQHSEVNGSTSTASAESSSTPTTLSLP) are enriched in low complexity. Residues 190–380 (ESGEFSSVGE…QLDPSSKDVR (191 aa)) are ubiquitin-binding region (UBR) domain. Positions 193–200 (EFSSVGEN) match the LC3-interacting region (LIR); mediates interaction with MAP1LC3A AND MAP1LC3C motif. The segment at 348–396 (FQIPGISGSASDQLKEASGTDVRQLDPSSKDVRQKGKRGKKTKGTSSEE) is disordered. A Glycyl lysine isopeptide (Lys-Gly) (interchain with G-Cter in ubiquitin) cross-link involves residue K362. One can recognise a Senescence domain in the interval 427–611 (ILSGASWVSW…YNIDNIGIKA (185 aa)). Residues 431–503 (ASWVSWGLVK…LVDGVCTVAN (73 aa)) form a required for localization to lipid droplets region. The residue at position 470 (S470) is a Phosphoserine. Residues 631-668 (IDNSKGENPGGGASANLKGEKDEQKEGPEKNGAKKKDK) are disordered. Basic and acidic residues predominate over residues 648–668 (KGEKDEQKEGPEKNGAKKKDK).

In terms of assembly, interacts with ITCH and WWP1. Interacts (via MIT domain) with IST1; leading to the recruitment of SPART to midbodies. Interacts with MAP1LC3A and MAP1LC3C. In terms of processing, ubiquitinated; ubiquitination does not require ITCH and WWP1.

Its subcellular location is the cytoplasm. The protein resides in the midbody. It localises to the lipid droplet. Its function is as follows. Lipophagy receptor that plays an important role in lipid droplet (LD) turnover in motor neurons. Localizes to LDs and interacts with components of the autophagy machinery, such as MAP1LC3A/C proteins to deliver LDs to autophagosomes for degradation via lipophagy. Lipid transfer protein required for lipid droplet degradation, including by lipophagy. Can bind and transfer all lipid species found in lipid droplets, from phospholipids to triglycerides and sterol esters but the direction of lipid transfer by spartin and its cargos are unknown. May be implicated in endosomal trafficking, or microtubule dynamics, or both. Participates in cytokinesis. This Bos taurus (Bovine) protein is Spartin.